A 79-amino-acid chain; its full sequence is U24-theraphotoxin-Cg1a (79 aa).

The first 19 residues, 1-19 (MRVLFIIAVLALISVGCYA), serve as a signal peptide directing secretion. The propeptide occupies 20 to 44 (SEMKDRSSRNEVLSAIFAIEEPQER). 3 disulfides stabilise this stretch: Cys46–Cys61, Cys53–Cys66, and Cys60–Cys73. Trp78 bears the Tryptophan amide mark.

It belongs to the neurotoxin 10 (Hwtx-1) family. 35 (Jztx-27) subfamily. As to expression, expressed by the venom gland.

It is found in the secreted. Its function is as follows. Probable ion channel inhibitor. The chain is U24-theraphotoxin-Cg1a from Chilobrachys guangxiensis (Chinese earth tiger tarantula).